A 508-amino-acid polypeptide reads, in one-letter code: Light-independent protochlorophyllide reductase subunit B (508 aa).

Asp-36 contributes to the [4Fe-4S] cluster binding site. Asp-294 serves as the catalytic Proton donor. 429–430 (GM) lines the substrate pocket.

Belongs to the ChlB/BchB/BchZ family. Protochlorophyllide reductase is composed of three subunits; ChlL, ChlN and ChlB. Forms a heterotetramer of two ChlB and two ChlN subunits. The cofactor is [4Fe-4S] cluster.

It carries out the reaction chlorophyllide a + oxidized 2[4Fe-4S]-[ferredoxin] + 2 ADP + 2 phosphate = protochlorophyllide a + reduced 2[4Fe-4S]-[ferredoxin] + 2 ATP + 2 H2O. Its pathway is porphyrin-containing compound metabolism; chlorophyll biosynthesis (light-independent). In terms of biological role, component of the dark-operative protochlorophyllide reductase (DPOR) that uses Mg-ATP and reduced ferredoxin to reduce ring D of protochlorophyllide (Pchlide) to form chlorophyllide a (Chlide). This reaction is light-independent. The NB-protein (ChlN-ChlB) is the catalytic component of the complex. This is Light-independent protochlorophyllide reductase subunit B from Trichormus variabilis (strain ATCC 29413 / PCC 7937) (Anabaena variabilis).